The sequence spans 210 residues: Large ribosomal subunit protein uL3 (210 aa).

Belongs to the universal ribosomal protein uL3 family. Part of the 50S ribosomal subunit. Forms a cluster with proteins L14 and L19.

Functionally, one of the primary rRNA binding proteins, it binds directly near the 3'-end of the 23S rRNA, where it nucleates assembly of the 50S subunit. The protein is Large ribosomal subunit protein uL3 of Solibacter usitatus (strain Ellin6076).